The sequence spans 348 residues: MTAPSQVLKIRRPDDWHVHLRDGDMLKTVVPYTSEIYGRAIVMPNLASPITTVDAAIAYRQRILDAVPAGHDFTPLMTCYLTDSLDADELERGFHEGVFTAAKLYPANATTNSSHGVTSVDAIMPVLERMEKLGMPLLVHGEVTHAEVDIFDREARFIDTVMEPLRQRLTALKVVFEHITTKDAAQYVRDGNDYLAATITPQHLMFNRNDMLVGGIRPHLYCLPILKRNIHQQALRELVASGFTRAFLGTDSAPHSRHRKETSCGCAGCFNAPSALGSYAAVFEEMNALAHFEAFCSLNGPQFYGLPVNAGWVELVRDEQQVPENIALADDSLVPFLAGETVRWSVKK.

Zn(2+)-binding residues include His-17 and His-19. Substrate-binding positions include 19 to 21 and Asn-45; that span reads HLR. Residues Lys-103, His-140, and His-178 each coordinate Zn(2+). An N6-carboxylysine modification is found at Lys-103. Residue His-140 coordinates substrate. Residue Leu-223 coordinates substrate. Asp-251 contributes to the Zn(2+) binding site. The active site involves Asp-251. Positions 255 and 267 each coordinate substrate.

Belongs to the metallo-dependent hydrolases superfamily. DHOase family. Class II DHOase subfamily. In terms of assembly, homodimer. Zn(2+) serves as cofactor.

It catalyses the reaction (S)-dihydroorotate + H2O = N-carbamoyl-L-aspartate + H(+). It participates in pyrimidine metabolism; UMP biosynthesis via de novo pathway; (S)-dihydroorotate from bicarbonate: step 3/3. Its function is as follows. Catalyzes the reversible cyclization of carbamoyl aspartate to dihydroorotate. In Salmonella dublin (strain CT_02021853), this protein is Dihydroorotase.